We begin with the raw amino-acid sequence, 488 residues long: uncharacterized protein (488 aa).

The protein resides in the cytoplasm. It is found in the nucleus. This is an uncharacterized protein from Schizosaccharomyces pombe (strain 972 / ATCC 24843) (Fission yeast).